A 362-amino-acid polypeptide reads, in one-letter code: MTELLKTPIHPLYAKYGAKTIDFGGWDLPVQFAGIKAEHEAVRTDAGLFDVSHMGEILVKGPDSTSYLQYLLSNDIEKIKIGKAQYNIMCYENGGTVDDLVVYKKSETEYILVVNAANTEKDFEWMVQNVRGDVTVTNVSAEYGQLALQGPSAEKILSKLTDVDLSSISFFGFIEDVEVAGVKTIISRSGYTGEDGFEIYMASADAGKVFEAILAEGVAPIGLGARDTLRLEAVLALYGQELSKDITPLEAGLNFAVKLKKEADFIGKEALIKQKEAGLTRKLVGIELIERGIPRHDYPVFLNDKEVGIVTSGTQSPTFGTNIGLALIDTAYAELGQELEVGIRNKKVKAKIVQTPFYKRAK.

It belongs to the GcvT family. As to quaternary structure, the glycine cleavage system is composed of four proteins: P, T, L and H.

The catalysed reaction is N(6)-[(R)-S(8)-aminomethyldihydrolipoyl]-L-lysyl-[protein] + (6S)-5,6,7,8-tetrahydrofolate = N(6)-[(R)-dihydrolipoyl]-L-lysyl-[protein] + (6R)-5,10-methylene-5,6,7,8-tetrahydrofolate + NH4(+). In terms of biological role, the glycine cleavage system catalyzes the degradation of glycine. This Listeria welshimeri serovar 6b (strain ATCC 35897 / DSM 20650 / CCUG 15529 / CIP 8149 / NCTC 11857 / SLCC 5334 / V8) protein is Aminomethyltransferase.